We begin with the raw amino-acid sequence, 92 residues long: Small ribosomal subunit protein bS20 (92 aa).

The interval 1–23 is disordered; it reads MANSPSAKKRAIQAEKRRSHNAS.

It belongs to the bacterial ribosomal protein bS20 family.

Binds directly to 16S ribosomal RNA. This Stutzerimonas stutzeri (strain A1501) (Pseudomonas stutzeri) protein is Small ribosomal subunit protein bS20.